The chain runs to 715 residues: Methionine--tRNA ligase (715 aa).

Positions 17–27 (PYANGPIHLGH) match the 'HIGH' region motif. Zn(2+) contacts are provided by Cys-148, Cys-151, Cys-161, and Cys-164. The 'KMSKS' region signature appears at 359-363 (KMSKS). Lys-362 serves as a coordination point for ATP. The tRNA-binding domain occupies 614 to 715 (DLSKVELRVG…KDAKPGDRLK (102 aa)).

This sequence belongs to the class-I aminoacyl-tRNA synthetase family. MetG type 1 subfamily. In terms of assembly, homodimer. Requires Zn(2+) as cofactor.

It localises to the cytoplasm. The catalysed reaction is tRNA(Met) + L-methionine + ATP = L-methionyl-tRNA(Met) + AMP + diphosphate. In terms of biological role, is required not only for elongation of protein synthesis but also for the initiation of all mRNA translation through initiator tRNA(fMet) aminoacylation. This chain is Methionine--tRNA ligase, found in Leptospira interrogans serogroup Icterohaemorrhagiae serovar copenhageni (strain Fiocruz L1-130).